The following is an 881-amino-acid chain: Heat shock protein 70 homolog LHS1 (881 aa).

A signal peptide spans 1-20 (MRNVLRLLFLTAFVAIGSLA). N-linked (GlcNAc...) asparagine glycosylation is found at asparagine 128, asparagine 458, asparagine 474, asparagine 481, asparagine 489, asparagine 527, and asparagine 844. A compositionally biased stretch (basic and acidic residues) spans 833 to 844 (RKLEQEKSRNNN). Residues 833–881 (RKLEQEKSRNNNETESTVINSADDKTTIVNDKTTESNPSSEEDILHDEL) form a disordered region. Residues 859 to 871 (TIVNDKTTESNPS) are compositionally biased toward polar residues. Residues 872–881 (SEEDILHDEL) show a composition bias toward acidic residues. The Prevents secretion from ER signature appears at 878–881 (HDEL).

Belongs to the heat shock protein 70 family. Interacts with the heat shock protein 70 (HSP70) KAR2, and this stimulates nucleotide exchange on KAR2. KAR2 in turn acts to stimulate the ATPase activity of LHS1. N-glycosylated.

The protein localises to the endoplasmic reticulum lumen. It catalyses the reaction ATP + H2O = ADP + phosphate + H(+). In terms of biological role, chaperone required for protein translocation and folding in the endoplasmic reticulum. The protein is Heat shock protein 70 homolog LHS1 (LHS1) of Saccharomyces cerevisiae (strain ATCC 204508 / S288c) (Baker's yeast).